We begin with the raw amino-acid sequence, 63 residues long: Protein DsrB (63 aa).

It belongs to the DsrB family.

The sequence is that of Protein DsrB from Yersinia pseudotuberculosis serotype O:1b (strain IP 31758).